The following is a 126-amino-acid chain: Glycine cleavage system H protein (126 aa).

A Lipoyl-binding domain is found at Thr-21 to Lys-103. Lys-62 carries the post-translational modification N6-lipoyllysine.

Belongs to the GcvH family. The glycine cleavage system is composed of four proteins: P, T, L and H. The cofactor is (R)-lipoate.

Functionally, the glycine cleavage system catalyzes the degradation of glycine. The H protein shuttles the methylamine group of glycine from the P protein to the T protein. This is Glycine cleavage system H protein from Vibrio cholerae serotype O1 (strain ATCC 39541 / Classical Ogawa 395 / O395).